The sequence spans 514 residues: 2,3-bisphosphoglycerate-independent phosphoglycerate mutase (514 aa).

Mn(2+) contacts are provided by aspartate 14 and serine 64. Serine 64 acts as the Phosphoserine intermediate in catalysis. Substrate-binding positions include histidine 125, 155 to 156 (RD), arginine 187, arginine 193, 263 to 266 (RADR), and lysine 337. Mn(2+) contacts are provided by aspartate 404, histidine 408, aspartate 445, histidine 446, and histidine 464.

Belongs to the BPG-independent phosphoglycerate mutase family. As to quaternary structure, monomer. Mn(2+) is required as a cofactor.

It carries out the reaction (2R)-2-phosphoglycerate = (2R)-3-phosphoglycerate. Its pathway is carbohydrate degradation; glycolysis; pyruvate from D-glyceraldehyde 3-phosphate: step 3/5. In terms of biological role, catalyzes the interconversion of 2-phosphoglycerate and 3-phosphoglycerate. The sequence is that of 2,3-bisphosphoglycerate-independent phosphoglycerate mutase from Pseudoalteromonas translucida (strain TAC 125).